A 310-amino-acid chain; its full sequence is Ribosomal RNA small subunit methyltransferase H (310 aa).

S-adenosyl-L-methionine-binding positions include 32-34 (AGH), Asp51, Phe78, Asp99, and Gln106. Residues 290–310 (GELEDNRRSRSAKLRVAEKQK) are disordered.

Belongs to the methyltransferase superfamily. RsmH family.

Its subcellular location is the cytoplasm. It carries out the reaction cytidine(1402) in 16S rRNA + S-adenosyl-L-methionine = N(4)-methylcytidine(1402) in 16S rRNA + S-adenosyl-L-homocysteine + H(+). Functionally, specifically methylates the N4 position of cytidine in position 1402 (C1402) of 16S rRNA. This chain is Ribosomal RNA small subunit methyltransferase H, found in Exiguobacterium sp. (strain ATCC BAA-1283 / AT1b).